A 330-amino-acid polypeptide reads, in one-letter code: MKVYYEQDATLEVLKDKTVAIIGYGSQGHAHAQNLRDSGINVVVGQRPGGANYELAKEHGFAPLPVAEAAAKADLIMILLPDQVQAAIYEAEIKPNLKPGDALLFAHGFNIHFGQIEPPKDVDVFMIAPKGPGHLVRRTYTEGGGVPCLVAIHQDATGKAMEKALAYAKGVGGARSGVIETTFKEETETDLFGEQAVLCGGLSSLIKAGFETLVEAGYQPEIAYFECLHEVKLIVDLIYEGGLAKMRHSISDTAEYGDYVTGRRIVNEETKKEMKKVLQEIQEGTFARNFILEAKAGYPGFKATRRIEADHQIEQVGGKLRGMMPWLHKK.

The KARI N-terminal Rossmann domain maps to 1–181 (MKVYYEQDAT…GGARSGVIET (181 aa)). NADP(+)-binding positions include 24–27 (YGSQ), Arg-47, and 82–85 (DQVQ). His-107 is an active-site residue. Residue Gly-133 coordinates NADP(+). Residues 182-327 (TFKEETETDL…GKLRGMMPWL (146 aa)) enclose the KARI C-terminal knotted domain. Mg(2+) is bound by residues Asp-190, Glu-194, Glu-226, and Glu-230. Ser-251 provides a ligand contact to substrate.

It belongs to the ketol-acid reductoisomerase family. It depends on Mg(2+) as a cofactor.

It carries out the reaction (2R)-2,3-dihydroxy-3-methylbutanoate + NADP(+) = (2S)-2-acetolactate + NADPH + H(+). The catalysed reaction is (2R,3R)-2,3-dihydroxy-3-methylpentanoate + NADP(+) = (S)-2-ethyl-2-hydroxy-3-oxobutanoate + NADPH + H(+). It functions in the pathway amino-acid biosynthesis; L-isoleucine biosynthesis; L-isoleucine from 2-oxobutanoate: step 2/4. It participates in amino-acid biosynthesis; L-valine biosynthesis; L-valine from pyruvate: step 2/4. In terms of biological role, involved in the biosynthesis of branched-chain amino acids (BCAA). Catalyzes an alkyl-migration followed by a ketol-acid reduction of (S)-2-acetolactate (S2AL) to yield (R)-2,3-dihydroxy-isovalerate. In the isomerase reaction, S2AL is rearranged via a Mg-dependent methyl migration to produce 3-hydroxy-3-methyl-2-ketobutyrate (HMKB). In the reductase reaction, this 2-ketoacid undergoes a metal-dependent reduction by NADPH to yield (R)-2,3-dihydroxy-isovalerate. This is Ketol-acid reductoisomerase (NADP(+)) from Nitratidesulfovibrio vulgaris (strain DSM 19637 / Miyazaki F) (Desulfovibrio vulgaris).